A 226-amino-acid chain; its full sequence is MNPMQADAKQLLQEFKQLLQENEITEEKCNIGLAPVTLALTSTQAELANAARSVFTVAQDVSRFGNMGAYTGEVSAELLKDSQIEYVLIGHSERREYFAESAAILNAKAQNALNAGLKVIYCVGESLEQRESGQAEVVVLQQICDLASVVTAEQWPHIVIAYEPIWAIGTGKTASPEDAQTMHAKIREGLTQITSHGANMAILYGGSVKAENAVELAACPDINGAL.

Histidine 91 (electrophile) is an active-site residue. The active-site Proton acceptor is the glutamate 163. Positions 169 and 207 each coordinate substrate.

The protein belongs to the triosephosphate isomerase family. In terms of assembly, homodimer.

It is found in the cytoplasm. It catalyses the reaction D-glyceraldehyde 3-phosphate = dihydroxyacetone phosphate. The protein operates within carbohydrate biosynthesis; gluconeogenesis. Its pathway is carbohydrate degradation; glycolysis; D-glyceraldehyde 3-phosphate from glycerone phosphate: step 1/1. In terms of biological role, involved in the gluconeogenesis. Catalyzes stereospecifically the conversion of dihydroxyacetone phosphate (DHAP) to D-glyceraldehyde-3-phosphate (G3P). The chain is Triosephosphate isomerase from Rhizobium etli (strain ATCC 51251 / DSM 11541 / JCM 21823 / NBRC 15573 / CFN 42).